A 650-amino-acid chain; its full sequence is Replication protein E1 (650 aa).

The short motif at 84-86 (KRK) is the Nuclear localization signal element. 4 positions are modified to phosphoserine; by host: Ser90, Ser94, Ser108, and Ser121. A Nuclear export signal motif is present at residues 107 to 116 (LSPQINVLSI). The DNA-binding region stretch occupies residues 187 to 353 (TESTPITDIT…QTLVQHSLDD (167 aa)). Residues 452-602 (VEFMPFLITL…FPFDSNGNPL (151 aa)) form the SF3 helicase domain. An ATP-binding site is contributed by 478–485 (GPPDTGKS). A Glycyl lysine isopeptide (Lys-Gly) (interchain with G-Cter in SUMO) cross-link involves residue Lys559.

The protein belongs to the papillomaviridae E1 protein family. In terms of assembly, can form hexamers. Interacts with E2 protein; this interaction increases E1 DNA binding specificity. Interacts with host DNA polymerase subunit POLA2. Interacts with host single stranded DNA-binding protein RPA1. Interacts with host TOP1; this interaction stimulates the enzymatic activity of TOP1. Post-translationally, phosphorylated. Sumoylated.

The protein localises to the host nucleus. It carries out the reaction Couples ATP hydrolysis with the unwinding of duplex DNA by translocating in the 3'-5' direction.. The catalysed reaction is ATP + H2O = ADP + phosphate + H(+). In terms of biological role, ATP-dependent DNA 3'-5' helicase required for initiation of viral DNA replication. It forms a complex with the viral E2 protein. The E1-E2 complex binds to the replication origin which contains binding sites for both proteins. During the initial step, a dimer of E1 interacts with a dimer of protein E2 leading to a complex that binds the viral origin of replication with high specificity. Then, a second dimer of E1 displaces the E2 dimer in an ATP-dependent manner to form the E1 tetramer. Following this, two E1 monomers are added to each half of the site, which results in the formation of two E1 trimers on the viral ori. Subsequently, two hexamers will be created. The double hexamer acts as a bi-directional helicase machinery and unwinds the viral DNA and then recruits the host DNA polymerase to start replication. In Homo sapiens (Human), this protein is Replication protein E1.